A 424-amino-acid polypeptide reads, in one-letter code: Cytoplasmic tRNA 2-thiolation protein 2 (424 aa).

The segment at 357–385 is disordered; sequence PAAPETEEEEELSKKAHMEKSQEKTGDAD. Over residues 368-385 the composition is skewed to basic and acidic residues; the sequence is LSKKAHMEKSQEKTGDAD.

The protein belongs to the CTU2/NCS2 family.

It is found in the cytoplasm. The protein operates within tRNA modification; 5-methoxycarbonylmethyl-2-thiouridine-tRNA biosynthesis. In terms of biological role, plays a central role in 2-thiolation of mcm(5)S(2)U at tRNA wobble positions of tRNA(Lys), tRNA(Glu) and tRNA(Gln). May act by forming a heterodimer with NCS6 that ligates sulfur from thiocarboxylated URM1 onto the uridine of tRNAs at wobble position. Prior mcm(5) tRNA modification by the elongator complex is required for 2-thiolation. May also be involved in protein urmylation. In Yarrowia lipolytica (strain CLIB 122 / E 150) (Yeast), this protein is Cytoplasmic tRNA 2-thiolation protein 2.